Here is a 522-residue protein sequence, read N- to C-terminus: Amphoterin-induced protein 2 (522 aa).

The N-terminal stretch at 1–39 (MSLRVHTLPTLLGAVVRPGCRELLCLLMITVAVGPGASG) is a signal peptide. The region spanning 40-68 (VCPTACICATDIVSCTNKHLSKVPGNLFR) is the LRRNT domain. At 40-398 (VCPTACICAT…RSHAHEAFNT (359 aa)) the chain is on the extracellular side. Intrachain disulfides connect Cys-41-Cys-47 and Cys-45-Cys-54. 6 LRR repeats span residues 69 to 90 (LMKR…WIPV), 94 to 115 (KLNT…SFST), 118 to 139 (NLKC…VFQE), 142 to 163 (VLEV…AFGG), 166 to 187 (QLQK…LYVG), and 193 to 214 (ELMF…HINL). Asn-104 carries an N-linked (GlcNAc...) asparagine glycan. The LRRCT domain maps to 228–284 (NPFVCDCSLYSLLVFWYRRHFSSVMDFKNDYTCRLWSDSRHSRQVLLLQDSFMNCSD). Disulfide bonds link Cys-232-Cys-260 and Cys-234-Cys-282. Residues Asn-281, Asn-288, Asn-345, Asn-373, Asn-381, and Asn-384 are each glycosylated (N-linked (GlcNAc...) asparagine). In terms of domain architecture, Ig-like C2-type spans 289–379 (GSFRALGFIH…RLLNETVDVT (91 aa)). Cys-310 and Cys-363 are disulfide-bonded. Residues 399–419 (AFTTLAACVASIVLVLLYLYL) form a helical membrane-spanning segment. The Cytoplasmic portion of the chain corresponds to 420–522 (TPCPCKCKTK…FSDTPFVAST (103 aa)). The disordered stretch occupies residues 501–522 (RGKSDSDSVNSVFSDTPFVAST).

It belongs to the immunoglobulin superfamily. AMIGO family. Binds itself as well as AMIGO1 and AMIGO3.

Its subcellular location is the cell membrane. The protein localises to the nucleus. In terms of biological role, required for depolarization-dependent survival of cultured cerebellar granule neurons. May mediate homophilic as well as heterophilic cell-cell interaction with AMIGO1 or AMIGO3. May contribute to signal transduction through its intracellular domain. The chain is Amphoterin-induced protein 2 from Pongo abelii (Sumatran orangutan).